We begin with the raw amino-acid sequence, 567 residues long: Thiol:disulfide interchange protein DsbD (567 aa).

The signal sequence occupies residues 1-19 (MAQRIFTLILLLCSTSAFA). Intrachain disulfides connect Cys-122–Cys-128 and Cys-185–Cys-307. 8 helical membrane-spanning segments follow: residues 166–186 (LPFSALWALLIGIGIAFTPCV), 210–230 (LLLAFIYVQGMALTYTALGLV), 246–266 (YVLIGLAIVFTLLALSMFGLF), 299–319 (IAGLICSPCTTAPLSAILLYI), 326–346 (WLGGGTLYLYALGMGLPLMLV), 360–380 (WMAHVKTAFGFVILALPVFLL), 387–407 (AWGLRLWSLLGVAFFGWAFIT), and 418–438 (IVQIILLAAALISVRPLQDWA). The region spanning 435–567 (QDWAFGSPSA…FSAHLHDRQP (133 aa)) is the Thioredoxin domain. Cys-482 and Cys-485 form a disulfide bridge.

Belongs to the thioredoxin family. DsbD subfamily.

It localises to the cell inner membrane. The catalysed reaction is [protein]-dithiol + NAD(+) = [protein]-disulfide + NADH + H(+). It carries out the reaction [protein]-dithiol + NADP(+) = [protein]-disulfide + NADPH + H(+). Functionally, required to facilitate the formation of correct disulfide bonds in some periplasmic proteins and for the assembly of the periplasmic c-type cytochromes. Acts by transferring electrons from cytoplasmic thioredoxin to the periplasm. This transfer involves a cascade of disulfide bond formation and reduction steps. This is Thiol:disulfide interchange protein DsbD from Salmonella choleraesuis (strain SC-B67).